The chain runs to 393 residues: Demethylspheroidene O-methyltransferase (393 aa).

The segment at 1-36 (MPKDDHTGATADRTAQPTGTGKQPLVPGQPGAAPVQ) is disordered. The segment covering 26 to 36 (VPGQPGAAPVQ) has biased composition (low complexity). The S-adenosyl-L-methionine site is built by Asp-259 and Arg-297.

It belongs to the class I-like SAM-binding methyltransferase superfamily. Cation-independent O-methyltransferase family.

It catalyses the reaction demethylspheroidene + S-adenosyl-L-methionine = spheroidene + S-adenosyl-L-homocysteine + H(+). It participates in carotenoid biosynthesis; spheroidene biosynthesis. In terms of biological role, methyltransferase that mediates the O-methylation of 1-hydroxy carotenoids. Converts hydroxyneurosporene to methoxyneurosporene or demethylspheroidene to spheroidene. Also able to produce spirilloxanthin. This is Demethylspheroidene O-methyltransferase (crtF) from Rhodobacter capsulatus (strain ATCC BAA-309 / NBRC 16581 / SB1003).